Consider the following 700-residue polypeptide: non-specific serine/threonine protein kinase Cdc7 (700 aa).

Residues 127–644 (FDVHSRIGNG…AEEALKHPFF (518 aa)) enclose the Protein kinase domain. ATP is bound by residues 133–141 (IGNGTFSTV) and K163. D250 functions as the Proton acceptor in the catalytic mechanism.

This sequence belongs to the protein kinase superfamily. Ser/Thr protein kinase family. Component of the Dbf4-dependent kinase (DDK) complex consisting of Cdc7 and the Dbf4 ortholog chif. Interacts with chif (via the processed polypeptide Chiffon-A); the interaction is direct.

It carries out the reaction L-seryl-[protein] + ATP = O-phospho-L-seryl-[protein] + ADP + H(+). The enzyme catalyses L-threonyl-[protein] + ATP = O-phospho-L-threonyl-[protein] + ADP + H(+). With respect to regulation, activated by chif. Inhibited by the synthetic compound XL413. Its function is as follows. Catalytic component of the Dbf4-dependent kinase (DDK) complex. Phosphorylates components of the pre-replication complex, including Mcm2 and, to a lesser extent, Mcm4. Phosphorylates histones, including H3 and H2B. Required for DNA replication and mitotic proliferation, including during the endoreplication and amplification stages of DNA replication in egg chamber follicle cells of the ovary. This chain is non-specific serine/threonine protein kinase Cdc7, found in Drosophila melanogaster (Fruit fly).